We begin with the raw amino-acid sequence, 576 residues long: Proline--tRNA ligase (576 aa).

It belongs to the class-II aminoacyl-tRNA synthetase family. ProS type 1 subfamily. In terms of assembly, homodimer.

It is found in the cytoplasm. The catalysed reaction is tRNA(Pro) + L-proline + ATP = L-prolyl-tRNA(Pro) + AMP + diphosphate. Functionally, catalyzes the attachment of proline to tRNA(Pro) in a two-step reaction: proline is first activated by ATP to form Pro-AMP and then transferred to the acceptor end of tRNA(Pro). As ProRS can inadvertently accommodate and process non-cognate amino acids such as alanine and cysteine, to avoid such errors it has two additional distinct editing activities against alanine. One activity is designated as 'pretransfer' editing and involves the tRNA(Pro)-independent hydrolysis of activated Ala-AMP. The other activity is designated 'posttransfer' editing and involves deacylation of mischarged Ala-tRNA(Pro). The misacylated Cys-tRNA(Pro) is not edited by ProRS. The polypeptide is Proline--tRNA ligase (Helicobacter pylori (strain J99 / ATCC 700824) (Campylobacter pylori J99)).